We begin with the raw amino-acid sequence, 237 residues long: Ly6/PLAUR domain-containing protein 8 (237 aa).

Residues 1-19 (MKGILVAGITAVLVAAVES) form the signal peptide. N-linked (GlcNAc...) asparagine glycans are attached at residues asparagine 45, asparagine 73, asparagine 107, asparagine 118, asparagine 132, asparagine 172, asparagine 175, and asparagine 185. Residues 125 to 176 (CPACYESNGTSCHGKPWKCYEEEQCVFLVAELKNDIESKSLVLKGCSNVSNA) enclose the UPAR/Ly6 domain. Asparagine 215 carries the GPI-anchor amidated asparagine lipid modification. A propeptide spans 216-237 (VGSKASLYLLALASLLLRGLLP) (removed in mature form).

Belongs to the CNF-like-inhibitor family. Post-translationally, highly N-glycosylated. Not O-glycosylated. GPI-anchored. The GPI-anchor is cleaved, leading to secretion into the colonic lumen. Expressed in the large intestine. Preferentially expressed on the epithelial layer exposed to the lumen (at protein level).

The protein localises to the cell membrane. It is found in the secreted. Functionally, secreted protein specifically required to prevent invasion of Gram-negative bacteria in the inner mucus layer of the colon epithelium, a portion of the large intestine which is free of commensal microbiota. Prevents invasion of flagellated microbiota by binding to the flagellum of bacteria, such as P.mirabilis, thereby inhibiting bacterial motility in the intestinal lumen. Segregation of intestinal bacteria and epithelial cells in the colon is required to preserve intestinal homeostasis. The sequence is that of Ly6/PLAUR domain-containing protein 8 from Homo sapiens (Human).